We begin with the raw amino-acid sequence, 134 residues long: Small ribosomal subunit protein uS11 (134 aa).

The interval 1 to 24 is disordered; it reads MATKMAGVKRAGRKRKERKNIERG.

This sequence belongs to the universal ribosomal protein uS11 family. In terms of assembly, part of the 30S ribosomal subunit. Interacts with proteins S7 and S18. Binds to IF-3.

In terms of biological role, located on the platform of the 30S subunit, it bridges several disparate RNA helices of the 16S rRNA. Forms part of the Shine-Dalgarno cleft in the 70S ribosome. The polypeptide is Small ribosomal subunit protein uS11 (Acetivibrio thermocellus (strain ATCC 27405 / DSM 1237 / JCM 9322 / NBRC 103400 / NCIMB 10682 / NRRL B-4536 / VPI 7372) (Clostridium thermocellum)).